The sequence spans 608 residues: Albumin (608 aa).

Positions 1-18 (MKWVTFISLLLLFSSAYS) are cleaved as a signal peptide. A propeptide spanning residues 19 to 24 (RGVTRR) is cleaved from the precursor. Albumin domains lie at 19 to 210 (RGVT…DALR), 211 to 403 (EKVL…EFKP), and 404 to 601 (LVEE…KLVA). His27 contacts Cu cation. Ser29 carries the post-translational modification Phosphoserine. Ca(2+)-binding residues include Glu30 and Asp37. The cysteines at positions 77 and 86 are disulfide-linked. Residues Ser82 and Ser89 each carry the phosphoserine modification. A Zn(2+)-binding site is contributed by His91. 6 cysteine pairs are disulfide-bonded: Cys99–Cys115, Cys114–Cys125, Cys148–Cys193, Cys192–Cys201, Cys224–Cys270, and Cys269–Cys277. The residue at position 229 (Lys229) is an N6-succinyllysine. Ca(2+) is bound at residue Glu268. Zn(2+) contacts are provided by His271 and Asp273. 4 residues coordinate Ca(2+): Asp273, Glu276, Asp279, and Asp283. 8 disulfide bridges follow: Cys289–Cys303, Cys302–Cys313, Cys340–Cys385, Cys384–Cys393, Cys416–Cys462, Cys461–Cys472, Cys485–Cys501, and Cys500–Cys511. At Ser443 the chain carries Phosphoserine. Phosphothreonine occurs at positions 444 and 446. Position 460 is an N6-succinyllysine (Lys460). At Ser513 the chain carries Phosphoserine. 2 cysteine pairs are disulfide-bonded: Cys538/Cys583 and Cys582/Cys591. Residue Lys558 is modified to N6-methyllysine. A Phosphothreonine modification is found at Thr570. Residue Lys588 is modified to N6-succinyllysine.

The protein belongs to the ALB/AFP/VDB family. Interacts with FCGRT; this interaction regulates ALB homeostasis. Interacts with TASOR. In plasma, occurs in a covalently-linked complex with chromophore-bound alpha-1-microglobulin; this interaction does not prevent fatty acid binding to ALB. Phosphorylated by FAM20C in the extracellular medium. As to expression, plasma.

The protein resides in the secreted. Binds water, Ca(2+), Na(+), K(+), fatty acids, hormones, bilirubin and drugs. Its main function is the regulation of the colloidal osmotic pressure of blood. Major zinc transporter in plasma, typically binds about 80% of all plasma zinc. Major calcium and magnesium transporter in plasma, binds approximately 45% of circulating calcium and magnesium in plasma. Potentially has more than two calcium-binding sites and might additionally bind calcium in a non-specific manner. The shared binding site between zinc and calcium at residue Asp-273 suggests a crosstalk between zinc and calcium transport in the blood. The rank order of affinity is zinc &gt; calcium &gt; magnesium. Binds to the bacterial siderophore enterobactin and inhibits enterobactin-mediated iron uptake of E.coli from ferric transferrin, and may thereby limit the utilization of iron and growth of enteric bacteria such as E.coli. Does not prevent iron uptake by the bacterial siderophore aerobactin. The protein is Albumin (ALB) of Felis catus (Cat).